Reading from the N-terminus, the 434-residue chain is Glutamate-1-semialdehyde 2,1-aminomutase 1 (434 aa).

Position 270 is an N6-(pyridoxal phosphate)lysine (Lys270).

Belongs to the class-III pyridoxal-phosphate-dependent aminotransferase family. HemL subfamily. Homodimer. Pyridoxal 5'-phosphate is required as a cofactor.

The protein resides in the cytoplasm. The enzyme catalyses (S)-4-amino-5-oxopentanoate = 5-aminolevulinate. It functions in the pathway porphyrin-containing compound metabolism; protoporphyrin-IX biosynthesis; 5-aminolevulinate from L-glutamyl-tRNA(Glu): step 2/2. The polypeptide is Glutamate-1-semialdehyde 2,1-aminomutase 1 (Bacillus anthracis (strain CDC 684 / NRRL 3495)).